The sequence spans 192 residues: UPF0301 protein BceJ2315_30870 (192 aa).

This sequence belongs to the UPF0301 (AlgH) family.

This Burkholderia cenocepacia (strain ATCC BAA-245 / DSM 16553 / LMG 16656 / NCTC 13227 / J2315 / CF5610) (Burkholderia cepacia (strain J2315)) protein is UPF0301 protein BceJ2315_30870.